Consider the following 98-residue polypeptide: uncharacterized protein (98 aa).

2 consecutive transmembrane segments (helical) span residues 14-34 (FLVI…PVTA) and 41-61 (MTGA…ASII).

It localises to the cell membrane. This is an uncharacterized protein from Haemophilus influenzae (strain ATCC 51907 / DSM 11121 / KW20 / Rd).